A 238-amino-acid chain; its full sequence is MGRKWNNIKEKKAQKDKNTSRIYAKFGKEIYVAAKSGEPDPESNQALRLTLERAKTYSVPNHIIEKAIEKAKGSGEENYDELRYEGFGPSGSMIIVDALTDNVNRTASDVRSAFGKNGGNMGVSGSVAYMFEYTAVFGIEDKSADDILESLMEQDIDVRDVIDENGLTIVYAEPDQFAQVQDALRETGVDTFKVAEFEMLPQTDIELSAEDQETFETLVEALEDLDDVQNVFHNVDLK.

Belongs to the TACO1 family. YeeN subfamily.

It is found in the cytoplasm. This chain is Probable transcriptional regulatory protein SSP2054, found in Staphylococcus saprophyticus subsp. saprophyticus (strain ATCC 15305 / DSM 20229 / NCIMB 8711 / NCTC 7292 / S-41).